The sequence spans 480 residues: Proline--tRNA ligase (480 aa).

It belongs to the class-II aminoacyl-tRNA synthetase family. ProS type 3 subfamily. As to quaternary structure, homodimer.

The protein resides in the cytoplasm. The catalysed reaction is tRNA(Pro) + L-proline + ATP = L-prolyl-tRNA(Pro) + AMP + diphosphate. Functionally, catalyzes the attachment of proline to tRNA(Pro) in a two-step reaction: proline is first activated by ATP to form Pro-AMP and then transferred to the acceptor end of tRNA(Pro). This Chloroflexus aggregans (strain MD-66 / DSM 9485) protein is Proline--tRNA ligase.